The chain runs to 266 residues: Glucosamine-6-phosphate deaminase (266 aa).

The Proton acceptor; for enolization step role is filled by Asp-72. The For ring-opening step role is filled by Asp-141. His-143 (proton acceptor; for ring-opening step) is an active-site residue. Glu-148 serves as the catalytic For ring-opening step.

The protein belongs to the glucosamine/galactosamine-6-phosphate isomerase family. NagB subfamily. As to quaternary structure, homohexamer.

The enzyme catalyses alpha-D-glucosamine 6-phosphate + H2O = beta-D-fructose 6-phosphate + NH4(+). Its pathway is amino-sugar metabolism; N-acetylneuraminate degradation; D-fructose 6-phosphate from N-acetylneuraminate: step 5/5. Allosterically activated by N-acetylglucosamine 6-phosphate (GlcNAc6P). Its function is as follows. Catalyzes the reversible isomerization-deamination of glucosamine 6-phosphate (GlcN6P) to form fructose 6-phosphate (Fru6P) and ammonium ion. This is Glucosamine-6-phosphate deaminase from Serratia proteamaculans (strain 568).